The sequence spans 276 residues: Adenylate kinase (276 aa).

51-56 provides a ligand contact to ATP; it reads GAGKGT. Residues 71–100 form an NMP region; that stretch reads ATGDMLRSQVAKKTPLGQAAKKIMDAGGLV. AMP contacts are provided by residues threonine 72, arginine 77, 98–100, 127–130, and glutamine 134; these read GLV and GFPR. The interval 168-205 is LID; that stretch reads GRLVHPASGRSYHVKFNPPKKEMTDDITGEPLIQRSDD. Residues arginine 169 and 178–179 each bind ATP; that span reads SY. Residues arginine 202 and arginine 213 each coordinate AMP. Glutamine 241 contacts ATP.

This sequence belongs to the adenylate kinase family. AK2 subfamily. In terms of assembly, monomer.

The protein resides in the cytoplasm. The protein localises to the cytosol. It localises to the mitochondrion intermembrane space. The enzyme catalyses AMP + ATP = 2 ADP. Functionally, catalyzes the reversible transfer of the terminal phosphate group between ATP and AMP. Plays an important role in cellular energy homeostasis and in adenine nucleotide metabolism. Adenylate kinase activity is critical for regulation of the phosphate utilization and the AMP de novo biosynthesis pathways. The sequence is that of Adenylate kinase from Podospora anserina (strain S / ATCC MYA-4624 / DSM 980 / FGSC 10383) (Pleurage anserina).